The chain runs to 216 residues: MTEETPGFEEKPDVPSGATPDDAEPKAADSSEEETAAPAGDLDPTVGLTAQLDQARTALGERTADLQRLQAEYQNYRRRVERDRVTVKEIAVANLLSELLPVLDDVGRARDHGELVGGFKSVAESLETTVAKLGLQQFGKEGEPFDPTIHEALMHSYAPDVTETTCVAILQPGYRIGERTIRPARVAVAEPQPGATPAAAKEEKTDDEESGGTEEV.

2 disordered regions span residues methionine 1–threonine 45 and arginine 185–valine 216. Acidic residues predominate over residues threonine 205–valine 216.

It belongs to the GrpE family. In terms of assembly, homodimer.

It is found in the cytoplasm. Its function is as follows. Participates actively in the response to hyperosmotic and heat shock by preventing the aggregation of stress-denatured proteins, in association with DnaK and GrpE. It is the nucleotide exchange factor for DnaK and may function as a thermosensor. Unfolded proteins bind initially to DnaJ; upon interaction with the DnaJ-bound protein, DnaK hydrolyzes its bound ATP, resulting in the formation of a stable complex. GrpE releases ADP from DnaK; ATP binding to DnaK triggers the release of the substrate protein, thus completing the reaction cycle. Several rounds of ATP-dependent interactions between DnaJ, DnaK and GrpE are required for fully efficient folding. This is Protein GrpE from Streptomyces griseus subsp. griseus (strain JCM 4626 / CBS 651.72 / NBRC 13350 / KCC S-0626 / ISP 5235).